A 206-amino-acid chain; its full sequence is MADQQLDYASAKFVTSAPDISKLPPDSGIEVAFAGRSNAGKSSALNTLTRQKALARTSKTPGRTQLINVFELTTGQRLIDLPGYGFAKVPLAVKEKWQRSLSEYLQQRDSLKGIVVLMDIRHPFRETDQELIYWAVDCDLPVLALLTKADKLKQGARKSTVLKAKQAAIAFNGDVQVEAFSSLKRIGVEQVEEKLNQWYSKEYDDE.

The EngB-type G domain occupies 27–201; that stretch reads SGIEVAFAGR…EEKLNQWYSK (175 aa). Residues 35-42, 62-66, 80-83, 147-150, and 180-182 each bind GTP; these read GRSNAGKS, GRTQL, DLPG, TKAD, and FSS. The Mg(2+) site is built by Ser42 and Thr64.

Belongs to the TRAFAC class TrmE-Era-EngA-EngB-Septin-like GTPase superfamily. EngB GTPase family. Mg(2+) serves as cofactor.

Its function is as follows. Necessary for normal cell division and for the maintenance of normal septation. This is Probable GTP-binding protein EngB from Idiomarina loihiensis (strain ATCC BAA-735 / DSM 15497 / L2-TR).